The primary structure comprises 413 residues: Acetate kinase (413 aa).

Mg(2+) is bound at residue asparagine 7. Residue lysine 14 participates in ATP binding. Arginine 98 contributes to the substrate binding site. Residue aspartate 157 is the Proton donor/acceptor of the active site. Residues 216–220 (HIGNG), 291–293 (DLR), and 339–343 (GVGEN) each bind ATP. Mg(2+) is bound at residue glutamate 392.

It belongs to the acetokinase family. In terms of assembly, homodimer. The cofactor is Mg(2+). Mn(2+) serves as cofactor.

It localises to the cytoplasm. It catalyses the reaction acetate + ATP = acetyl phosphate + ADP. The protein operates within metabolic intermediate biosynthesis; acetyl-CoA biosynthesis; acetyl-CoA from acetate: step 1/2. In terms of biological role, catalyzes the formation of acetyl phosphate from acetate and ATP. Can also catalyze the reverse reaction. The polypeptide is Acetate kinase (Synechocystis sp. (strain ATCC 27184 / PCC 6803 / Kazusa)).